A 241-amino-acid polypeptide reads, in one-letter code: Uracil-DNA glycosylase (241 aa).

Catalysis depends on aspartate 73, which acts as the Proton acceptor.

The protein belongs to the uracil-DNA glycosylase (UDG) superfamily. UNG family.

It localises to the cytoplasm. It carries out the reaction Hydrolyzes single-stranded DNA or mismatched double-stranded DNA and polynucleotides, releasing free uracil.. In terms of biological role, excises uracil residues from the DNA which can arise as a result of misincorporation of dUMP residues by DNA polymerase or due to deamination of cytosine. This chain is Uracil-DNA glycosylase, found in Agrobacterium fabrum (strain C58 / ATCC 33970) (Agrobacterium tumefaciens (strain C58)).